We begin with the raw amino-acid sequence, 217 residues long: Adenylate kinase (217 aa).

Residue 10 to 15 participates in ATP binding; it reads GGGKGT. Residues 30 to 59 form an NMP region; it reads STGDMLRAAVASGSEVGKKAKAVMDAGQLV. AMP contacts are provided by residues Thr31, Arg36, 57–59, 85–88, and Gln92; these read QLV and GFPR. Residues 126 to 164 are LID; it reads GRYTCAKCGAGYHDKFQLPQVAGKCDSCGGTEFARRPDD. Arg127 contacts ATP. Residues Cys130, Cys133, Cys150, and Cys153 each contribute to the Zn(2+) site. AMP is bound by residues Arg161 and Arg172. Met200 is a binding site for ATP.

It belongs to the adenylate kinase family. Monomer.

It is found in the cytoplasm. It carries out the reaction AMP + ATP = 2 ADP. The protein operates within purine metabolism; AMP biosynthesis via salvage pathway; AMP from ADP: step 1/1. Its function is as follows. Catalyzes the reversible transfer of the terminal phosphate group between ATP and AMP. Plays an important role in cellular energy homeostasis and in adenine nucleotide metabolism. This Paramagnetospirillum magneticum (strain ATCC 700264 / AMB-1) (Magnetospirillum magneticum) protein is Adenylate kinase.